Consider the following 724-residue polypeptide: uncharacterized protein (724 aa).

Disordered regions lie at residues 1 to 23 (MEDR…IPDN), 166 to 477 (PDGY…PPRD), 496 to 517 (EAHD…AHGP), and 532 to 691 (DHPI…PALS). Composition is skewed to polar residues over residues 227–245 (VSQS…TVNQ) and 270–296 (STTL…TSDA). Residues 304–322 (TRDHDRYGNGRGPDTDRLE) show a composition bias toward basic and acidic residues. The span at 403-413 (PSSSHSETPNM) shows a compositional bias: polar residues. 2 stretches are compositionally biased toward basic and acidic residues: residues 550–560 (RNHEFTEDKRL) and 637–657 (LRHD…DLAA). Residues 682 to 691 (RLAAASPALS) are compositionally biased toward low complexity.

This is an uncharacterized protein from Neurospora crassa (strain ATCC 24698 / 74-OR23-1A / CBS 708.71 / DSM 1257 / FGSC 987).